We begin with the raw amino-acid sequence, 133 residues long: Exonuclease VapC9 (133 aa).

The region spanning 5–113 (YLVDASALYA…LVLVTQDREL (109 aa)) is the PINc domain. The Mg(2+) site is built by Asp-8, Asp-92, and Asp-110.

It belongs to the PINc/VapC protein family. As to quaternary structure, homodimer, 2 of which then form a homotetramer. The cofactor is Mg(2+).

Inhibited by EDTA. Its function is as follows. Toxic component of a type II toxin-antitoxin (TA) system. In terms of biological role, has ribonuclease activity. Has a slow ssDNA exonuclease activity. This is Exonuclease VapC9 from Pyrobaculum aerophilum (strain ATCC 51768 / DSM 7523 / JCM 9630 / CIP 104966 / NBRC 100827 / IM2).